The following is a 246-amino-acid chain: Uridylate kinase (246 aa).

18 to 21 is a binding site for ATP; it reads KLSG. Gly60 lines the UMP pocket. ATP contacts are provided by Gly61 and Arg65. Residues Asp80 and 141 to 148 contribute to the UMP site; that span reads TGNPFFTT. The ATP site is built by Thr168, Tyr174, and Asp177.

Belongs to the UMP kinase family. Homohexamer.

The protein localises to the cytoplasm. It carries out the reaction UMP + ATP = UDP + ADP. It functions in the pathway pyrimidine metabolism; CTP biosynthesis via de novo pathway; UDP from UMP (UMPK route): step 1/1. With respect to regulation, inhibited by UTP. Functionally, catalyzes the reversible phosphorylation of UMP to UDP. The protein is Uridylate kinase of Pseudomonas syringae pv. syringae (strain B728a).